Reading from the N-terminus, the 224-residue chain is Probable 2-phosphosulfolactate phosphatase (224 aa).

This sequence belongs to the ComB family. It depends on Mg(2+) as a cofactor.

The enzyme catalyses (2R)-O-phospho-3-sulfolactate + H2O = (2R)-3-sulfolactate + phosphate. The protein is Probable 2-phosphosulfolactate phosphatase of Pseudothermotoga lettingae (strain ATCC BAA-301 / DSM 14385 / NBRC 107922 / TMO) (Thermotoga lettingae).